We begin with the raw amino-acid sequence, 303 residues long: MIKQRTLKNIIRATGVGLHSGEKVYLTLKPAPVDTGIVFCRADLDPVVQIPARAENVGETTMSTTLVNGDVKVDTVEHLLSAMAGLGIDNAYVELSASEVPIMDGSAGPFVFLIQSAGLEEQDAAKKFIRILREVTVEDGDKRATFVPFDGFKVSFEIDFDHPVFRDRTQSASVDFSSTSFVKEVSRARTFGFMSDIEYLRKHNLALGGSVENAIVVDSDGVLNEDGLRYEDEFVKHKILDAIGDLYLLGNSLIGEFKGFKSGHALNNQLLRKLIEQKDAWEVVTFEDASTAPISYMRPVAAV.

Zn(2+) contacts are provided by histidine 78, histidine 237, and aspartate 241. The active-site Proton donor is the histidine 264.

It belongs to the LpxC family. Zn(2+) is required as a cofactor.

It carries out the reaction a UDP-3-O-[(3R)-3-hydroxyacyl]-N-acetyl-alpha-D-glucosamine + H2O = a UDP-3-O-[(3R)-3-hydroxyacyl]-alpha-D-glucosamine + acetate. It functions in the pathway glycolipid biosynthesis; lipid IV(A) biosynthesis; lipid IV(A) from (3R)-3-hydroxytetradecanoyl-[acyl-carrier-protein] and UDP-N-acetyl-alpha-D-glucosamine: step 2/6. Its function is as follows. Catalyzes the hydrolysis of UDP-3-O-myristoyl-N-acetylglucosamine to form UDP-3-O-myristoylglucosamine and acetate, the committed step in lipid A biosynthesis. In Pseudomonas fluorescens (strain ATCC BAA-477 / NRRL B-23932 / Pf-5), this protein is UDP-3-O-acyl-N-acetylglucosamine deacetylase.